The primary structure comprises 273 residues: Large ribosomal subunit protein uL2 (273 aa).

Residues Val228–Lys273 are disordered. The segment covering Lys254–Lys273 has biased composition (basic residues).

It belongs to the universal ribosomal protein uL2 family. Part of the 50S ribosomal subunit. Forms a bridge to the 30S subunit in the 70S ribosome.

Functionally, one of the primary rRNA binding proteins. Required for association of the 30S and 50S subunits to form the 70S ribosome, for tRNA binding and peptide bond formation. It has been suggested to have peptidyltransferase activity; this is somewhat controversial. Makes several contacts with the 16S rRNA in the 70S ribosome. This is Large ribosomal subunit protein uL2 from Rickettsia peacockii (strain Rustic).